Consider the following 254-residue polypeptide: UPF0246 protein FTM_0239 (254 aa).

The protein belongs to the UPF0246 family.

This is UPF0246 protein FTM_0239 from Francisella tularensis subsp. mediasiatica (strain FSC147).